Consider the following 423-residue polypeptide: UDP-N-acetylglucosamine 1-carboxyvinyltransferase 1 (423 aa).

23-24 (KN) is a phosphoenolpyruvate binding site. Arginine 96 lines the UDP-N-acetyl-alpha-D-glucosamine pocket. Residue cysteine 120 is the Proton donor of the active site. Cysteine 120 carries the 2-(S-cysteinyl)pyruvic acid O-phosphothioketal modification. Residues 125 to 129 (RPIDL), aspartate 309, and valine 331 each bind UDP-N-acetyl-alpha-D-glucosamine.

This sequence belongs to the EPSP synthase family. MurA subfamily.

Its subcellular location is the cytoplasm. The enzyme catalyses phosphoenolpyruvate + UDP-N-acetyl-alpha-D-glucosamine = UDP-N-acetyl-3-O-(1-carboxyvinyl)-alpha-D-glucosamine + phosphate. The protein operates within cell wall biogenesis; peptidoglycan biosynthesis. Its function is as follows. Cell wall formation. Adds enolpyruvyl to UDP-N-acetylglucosamine. The chain is UDP-N-acetylglucosamine 1-carboxyvinyltransferase 1 from Streptococcus thermophilus (strain CNRZ 1066).